The chain runs to 357 residues: Probable dual-specificity RNA methyltransferase RlmN (357 aa).

The active-site Proton acceptor is the glutamate 95. A Radical SAM core domain is found at 105–343 (KKSSYTLCLS…VSIREERGSD (239 aa)). Cysteine 112 and cysteine 348 are oxidised to a cystine. Residues cysteine 119, cysteine 123, and cysteine 126 each coordinate [4Fe-4S] cluster. S-adenosyl-L-methionine-binding positions include 174–175 (GE), serine 206, 229–231 (SLH), and asparagine 305. Cysteine 348 acts as the S-methylcysteine intermediate in catalysis.

Belongs to the radical SAM superfamily. RlmN family. [4Fe-4S] cluster is required as a cofactor.

The protein localises to the cytoplasm. The enzyme catalyses adenosine(2503) in 23S rRNA + 2 reduced [2Fe-2S]-[ferredoxin] + 2 S-adenosyl-L-methionine = 2-methyladenosine(2503) in 23S rRNA + 5'-deoxyadenosine + L-methionine + 2 oxidized [2Fe-2S]-[ferredoxin] + S-adenosyl-L-homocysteine. The catalysed reaction is adenosine(37) in tRNA + 2 reduced [2Fe-2S]-[ferredoxin] + 2 S-adenosyl-L-methionine = 2-methyladenosine(37) in tRNA + 5'-deoxyadenosine + L-methionine + 2 oxidized [2Fe-2S]-[ferredoxin] + S-adenosyl-L-homocysteine. Functionally, specifically methylates position 2 of adenine 2503 in 23S rRNA and position 2 of adenine 37 in tRNAs. This Syntrophomonas wolfei subsp. wolfei (strain DSM 2245B / Goettingen) protein is Probable dual-specificity RNA methyltransferase RlmN.